We begin with the raw amino-acid sequence, 129 residues long: Omega-scoloptoxin(05)-Ssm1a (129 aa).

Residues 1 to 24 (MPSLCIIALFGTLTFYTLIPSIHT) form the signal peptide. Positions 25-46 (LKCVRCDGPMSNYDCKTTYPAA) are excised as a propeptide.

This sequence belongs to the scoloptoxin-05 family. Post-translationally, contains 3 disulfide bonds. In terms of tissue distribution, expressed by the venom gland.

The protein localises to the secreted. Its function is as follows. Toxin that increase voltage-gated calcium channel (Cav) currents in DRG neurons by 70% and 120%, when 1 uM and 10 uM are tested, respectively. This Scolopendra mutilans (Chinese red-headed centipede) protein is Omega-scoloptoxin(05)-Ssm1a.